We begin with the raw amino-acid sequence, 2382 residues long: MAAPSISPLFAPQMGVQRDFQDSEMQIATVNFPCTGQSNTSLANWLQQEEKSHLQLLQAAWSISLRSYTGSNDVLFSCLNTKDTAALGANSVVYVDEGNEDKYGSARRGNLREFDLAICFSKQNEANCPVIGIHHKPSVISTDFATMIAATVAKAIEEIVLHVDSLIASLDICSDADINCISRWNSPSDDGIPSAQCIHHIISQKCATQPESIAVSAWDGRLTYAELDGLSSSLAIRLQHLGVCQEIFVPLIFDKSKWAVIALLSVLKAGGAYFFLNPSNPIQYNLGLCSSLSPEVALCSPRHSTLAKSFAGTAIPVGEEHCELPESLPVDEKTPPCTAETTPSNAMYITFTSGTTGVPKGITTEHSAFYSMAMANGKALQVGPATRMLQFASYTFDVSNRDMLITLMFGGCICIPSELDRLNDLSGFINRQSVNLASLTPSLASTLNPALCPSLQGLVLGGESMNDSHISAWANHVRLFNAYGVSESAGIAALASDIQADYSPGNIGFGSGSTLWVVTIDQPDKLAPIGALGEMVIEGPSVARGYLGDKKRTEEQFTSTSKWKNRIRAQLSESRSSKRAFHTGDLVRYNLDGSLNFLGRKDHQVKIHGQRLELTAIEHHIAACLEVAESGFLHVAVVTAKNEGNGSVKLLAFLGLYTSRGSDSPSQLVSKKLEDVEALKVALRQHLLLCLPAFMVPVDFIFVQHMPLTTSGKINRLLLQEAAGHALLDDQKRNIDTSDLNGNQTPTTQNQRILIQSWAKALGIKSESIMRNDCFFRRGGDSIAAIKMAASLRQQELIISVSDVFKFSTFSDMASVLVKDHRPLQTAMLAPFSLIDNSQTVLDAVMEELGTGIDQIEDVYPCTHMQQGLIALTAQQPHSYIGRYTWQLAEMLDVEKFKNAWESAWLHNPILRTRIVQIPDGVFQVVVKTDMPWNTVTDISRGGDGKELREIDISNGPLIQFYLSKESFRLDIHHSLFDEWSLGLIMGQVERAYAGGGLRMQPFSPFVQHLLHERDTSLEDFWRQEFSGLQAEHFPAIASRPLSVEHPTEKVVLEHSVQLETGFSTKYTISSIVRLAWAIVLWHQTGSEDVVFGATVSGRNANIDGIDQLSGPTLATLPVRIKLAASQPIHEGLSQVQGQFVNMMVHEQAGLPRIRQVGREAAEACNFQNLLVVQPYEEQTESHMFKASANSASSSENAKSFASYPMVLICRPEKSGISMKAAFDPAILTPAAGHSILKQMSHVIQQLVTSDSTCIAAVSLVPPEDMATLRQWNHSLPNGVNTCIHARIQELCIGQPDTLAIHSQNLDLTYGQLDNYSDQFAQNLIGSGVKQGDFVPLFLERSPWVPVIMLAVLKTGAAFVLLDLSHPMQRLRTMCSMIDARIVVTSKEHADRSGNLLLPVIIFDPEAHAQNVSKQATAPELKPLTAVTTPDAPACVVFSSGSTGLPKGIVLPHSALTTSAAVMREYGMLGPKSRVFHFASFAFDISIGEILFTLAAGACVCVPHEEERKGNPAKAAGDLKVTWALLTPSVINLFDPSDVPTLEVLGSAGEPLTPQIVDTWAHRVKLYGMYAPAECTVISHIGRILPDTHHSNIGKSHGGVSWVVDPSDHNRLVPIGTVGELIVEGPTVSSGYLNDPAKTNEVFITSPSWLDEVRSHSGKMYKTGDLVRQTSEGSLEFVGRKDDQVKLHGQRLEVGEVEHCITSSCTAIKTATVECIKIREQNSRVSLVAFICPQTDEDWGQSLNDPSSEVGDLELISPPRDQFYSMIESLETSLRELLPAYMVPSFFVPLADVPLSLSGKVNRRLLRDQSTSWPMKRLGLYQLRRKSIPAEEVPVSIHGRKVQEIVGQALNLDPKSIPMNSNFFGLGGDSISAMQVSMLARRRGIRLTVADIFTQQTLSGLSLKCATENGDASQASKSRSLGRELPGSNIKSLHRCEIPRDKLPRQLPQEIADNIVEAMPATEFQTMTLHNFYSRYLWISLPERVNQEHLLNACDQLVQKHSVLRTVFYTNDDKSVVQLTLRKVPVNFVHYSNIENLEKHCADDSLAMGVPINSVPGFEVQLVTLRDSGMYLILRLPHAQFDGVSLDIICSDLSAAYSGDSLPPCAQFSDHIRHVWEKRIPESYNAWREVLGNVPMTSLNNKYLRNWGSASEMGSPNMGTDPDQPKVVTAMAETLPISPPPNITLATLVKLAWAITLSRLFTSIEEDDGASDDVVFGQVVHGRGLGISHEDRIVGPCLNIIPVRVHLPPRSNKLDLLGQVQQQHIQTMSVENLELGEITRNCTSWKAGTKFGSFIRFQNFTNNDDSTCSFDGSACETGLYSLPNRPSNTANVLVVPHGPTLSITMTISNQVLDRGSADFVAGYFSDVIESLASEETVCEYLE.

Positions 204 to 607 (QKCATQPESI…LGRKDHQVKI (404 aa)) are adenylation 1. A Carrier 1 domain is found at 745–821 (TPTTQNQRIL…DMASVLVKDH (77 aa)). Serine 782 carries the post-translational modification O-(pantetheine 4'-phosphoryl)serine. The segment at 857–1269 (EDVYPCTHMQ…LVPPEDMATL (413 aa)) is condensation 1. Residues 1294–1687 (GQPDTLAIHS…VGRKDDQVKL (394 aa)) form an adenylation 2 region. The region spanning 1833–1909 (VPVSIHGRKV…GLSLKCATEN (77 aa)) is the Carrier 2 domain. O-(pantetheine 4'-phosphoryl)serine is present on serine 1870. The condensation 2 stretch occupies residues 1967–2373 (MTLHNFYSRY…FSDVIESLAS (407 aa)).

It belongs to the NRP synthetase family.

It participates in pigment biosynthesis. Its function is as follows. Nonribosomal peptide synthetase; part of the gene cluster that mediates the biosynthesis of the yellow pigment chrysogine. the NRPS chyA mediates the condensation of anthranilic acid and alanine into the intermediate 2-(2-aminopropanamido)benzoic acid. The remainder of the pathway is highly branched yielding at least 13 chrysogine-related compounds. The malonyl transferase chyE converts 2-(2-aminopropanamido)benzoic acid and 2-(2-aminopropanamido)benzamidine into 2-(2-(2-carboxyacetamido)propanamido)benzoic acid and 3-((1-((2-carbamoylphenyl)amino)-1-oxopropan-2-yl)amino)-3-oxopropanoic acid, respectively. ChyD is an amidase, being responsible for the amidation of the carboxylic acid moiety of 2-(2-aminopropanamido)benzoic acid, 2-(2-(2-carboxyacetamido)propanamido)benzoic acid and 2-(2-((4-amino-1-carboxy-4-oxobutyl)amino)propanamido)benzoic acid. ChyC is involved in the same reactions as ChyD, but plays a more minor role in the amidation reactions compared to chyD. The oxidoreductases chyH and chyM are involved in oxidation reactions that form N-pyruvoylanthranilamide from 2-(2-aminopropanamido)benzamidine and (1-((2-carbamoylphenyl)amino)-1-oxopropan-2-yl)glutamine, respectively. N-pyruvoylanthranilamide is further converted via two further branches in the pathway, yielding chrysogine and additional chrysogine-related coumpounds. Chrysogine is likely formed by a spontaneous ring closure from N-pyruvoylanthranilamide. This Penicillium rubens (strain ATCC 28089 / DSM 1075 / NRRL 1951 / Wisconsin 54-1255) (Penicillium chrysogenum) protein is Nonribosomal peptide synthetase chyA.